The sequence spans 156 residues: D-aminoacyl-tRNA deacylase (156 aa).

The Gly-cisPro motif, important for rejection of L-amino acids signature appears at 139–140 (GP).

Belongs to the DTD family. In terms of assembly, homodimer.

It localises to the cytoplasm. The catalysed reaction is glycyl-tRNA(Ala) + H2O = tRNA(Ala) + glycine + H(+). It catalyses the reaction a D-aminoacyl-tRNA + H2O = a tRNA + a D-alpha-amino acid + H(+). In terms of biological role, an aminoacyl-tRNA editing enzyme that deacylates mischarged D-aminoacyl-tRNAs. Also deacylates mischarged glycyl-tRNA(Ala), protecting cells against glycine mischarging by AlaRS. Acts via tRNA-based rather than protein-based catalysis; rejects L-amino acids rather than detecting D-amino acids in the active site. By recycling D-aminoacyl-tRNA to D-amino acids and free tRNA molecules, this enzyme counteracts the toxicity associated with the formation of D-aminoacyl-tRNA entities in vivo and helps enforce protein L-homochirality. The chain is D-aminoacyl-tRNA deacylase from Marinobacter nauticus (strain ATCC 700491 / DSM 11845 / VT8) (Marinobacter aquaeolei).